The sequence spans 129 residues: Small ribosomal subunit protein uS11 (129 aa).

The protein belongs to the universal ribosomal protein uS11 family. As to quaternary structure, part of the 30S ribosomal subunit. Interacts with proteins S7 and S18. Binds to IF-3.

In terms of biological role, located on the platform of the 30S subunit, it bridges several disparate RNA helices of the 16S rRNA. Forms part of the Shine-Dalgarno cleft in the 70S ribosome. The protein is Small ribosomal subunit protein uS11 of Aromatoleum aromaticum (strain DSM 19018 / LMG 30748 / EbN1) (Azoarcus sp. (strain EbN1)).